The sequence spans 263 residues: Putative protein JayE (263 aa).

It belongs to the Mu gp47/PBSX XkdT family.

This is Putative protein JayE (jayE) from Escherichia coli (strain K12).